A 522-amino-acid polypeptide reads, in one-letter code: N-acetylgalactosamine-6-sulfatase (522 aa).

Positions 1 to 25 (MAAVAAATRWHLLLVLSAAGLGVTG) are cleaved as a signal peptide. Positions 27-379 (PQPPNILLLL…PAMLQGRLTE (353 aa)) are catalytic domain. Residues Asp38, Asp39, and Cys78 each coordinate Ca(2+). Cys78 serves as the catalytic Nucleophile. A 3-oxoalanine (Cys) modification is found at Cys78. His141 is an active-site residue. N-linked (GlcNAc...) asparagine glycosylation is present at Asn203. 2 residues coordinate Ca(2+): Asp288 and Asn289. Residues Cys308 and Cys419 are joined by a disulfide bond. A glycan (N-linked (GlcNAc...) asparagine) is linked at Asn423. 2 disulfides stabilise this stretch: Cys489–Cys518 and Cys501–Cys507.

Belongs to the sulfatase family. In terms of assembly, homodimer. It depends on Ca(2+) as a cofactor. In terms of processing, the conversion to 3-oxoalanine (also known as C-formylglycine, FGly), of a serine or cysteine residue in prokaryotes and of a cysteine residue in eukaryotes, is critical for catalytic activity.

It localises to the lysosome. The catalysed reaction is Hydrolysis of the 6-sulfate groups of the N-acetyl-D-galactosamine 6-sulfate units of chondroitin sulfate and of the D-galactose 6-sulfate units of keratan sulfate.. The chain is N-acetylgalactosamine-6-sulfatase (GALNS) from Sus scrofa (Pig).